Reading from the N-terminus, the 362-residue chain is Notoamide biosynthesis cluster protein J' (362 aa).

An N-terminal signal peptide occupies residues 1-22 (MRNMATMLHLLTLILLTSPAST). Asn157, Asn190, Asn280, and Asn338 each carry an N-linked (GlcNAc...) asparagine glycan.

Functionally, part of the gene cluster that mediates the biosynthesis of notoamide, a fungal indole alkaloid that belongs to a family of natural products containing a characteristic bicyclo[2.2.2]diazaoctane core. The first step of notoamide biosynthesis involves coupling of L-proline and L-tryptophan by the bimodular NRPS notE', to produce cyclo-L-tryptophan-L-proline called brevianamide F. The reverse prenyltransferase notF' then acts as a deoxybrevianamide E synthase and converts brevianamide F to deoxybrevianamide E via reverse prenylation at C-2 of the indole ring leading to the bicyclo[2.2.2]diazaoctane core. Deoxybrevianamide E is further hydroxylated at C-6 of the indole ring, likely catalyzed by the cytochrome P450 monooxygenase notG', to yield 6-hydroxy-deoxybrevianamide E. 6-hydroxy-deoxybrevianamide E is a specific substrate of the prenyltransferase notC' for normal prenylation at C-7 to produce 6-hydroxy-7-prenyl-deoxybrevianamide, also called notoamide S. As the proposed pivotal branching point in notoamide biosynthesis, notoamide S can be diverted to notoamide E through an oxidative pyran ring closure putatively catalyzed by either notH' cytochrome P450 monooxygenase or the notD' FAD-linked oxidoreductase. This step would be followed by an indole 2,3-epoxidation-initiated pinacol-like rearrangement catalyzed by the notB' FAD-dependent monooxygenase leading to the formation of notoamide C and notoamide D. On the other hand notoamide S is converted to notoamide T by notH' (or notD'), a bifunctional oxidase that also functions as the intramolecular Diels-Alderase responsible for generation of (-)-notoamide T. To generate antipodal (+)-notoaminide T, notH (or notD) in Aspergillus strain MF297-2 is expected to catalyze a Diels-Alder reaction leading to the opposite stereochemistry. The remaining oxidoreductase notD' (or notH') likely catalyzes the oxidative pyran ring formation to yield (-)-stephacidin A. The FAD-dependent monooxygenase notI' is highly similar to notB' and is predicted to catalyze a similar conversion from (-)-stephacidin A to (+)-notoamide B via the 2,3-epoxidation of (-)-stephacidin A followed by a pinacol-type rearrangement. Finally, it remains unclear which enzyme could be responsible for the final hydroxylation steps leading to notoamide A and sclerotiamide. The function of notJ' in the notoamide biosynthesis has not been determined yet. In Aspergillus versicolor, this protein is Notoamide biosynthesis cluster protein J'.